Consider the following 315-residue polypeptide: Alpha- and gamma-adaptin-binding protein p34 (315 aa).

Residues 197-234 form a disordered region; sequence IGSADPCHPEQPHLPAADSTESLSDHRGGASNTTDAQV. Ser310 and Ser311 each carry phosphoserine.

Associated with AP-1 and AP-2 complexes. Widely expressed, including in skin and keratinocytes, with highest levels in adrenal gland, rectum and thymus.

It localises to the cytoplasm. Its subcellular location is the cytosol. May be involved in endocytic recycling of growth factor receptors such as EGFR. The sequence is that of Alpha- and gamma-adaptin-binding protein p34 (AAGAB) from Homo sapiens (Human).